The sequence spans 222 residues: Charged multivesicular body protein 4a (222 aa).

2 disordered regions span residues 1–21 (MSGL…TPEE) and 180–211 (VGDK…DEDE). The interval 1-116 (MSGLGRLFGK…ELAAQSMKKA (116 aa)) is interaction with phosphoinosides. An intramolecular interaction with C-terminus region spans residues 1-150 (MSGLGRLFGK…QISDAISRPM (150 aa)). Coiled coils occupy residues 20–105 (EEAI…VLRT) and 155–180 (DVDE…LLNV). The interval 151-222 (GFGDDVDEDE…ALKQLAEWVS (72 aa)) is intramolecular interaction with N-terminus. Position 196 is a phosphoserine (S196).

Belongs to the SNF7 family. In terms of assembly, probable core component of the endosomal sorting required for transport complex III (ESCRT-III). ESCRT-III components are thought to multimerize to form a flat lattice on the perimeter membrane of the endosome. Several assembly forms of ESCRT-III may exist that interact and act sequentially. Self-associates; overexpression leads to the assembly of filaments that curve and associate to create circular rings. Interacts with CHMP2A. Interacts with CHMP3; the interaction requires the release of CHMP4A autoinhibition. Interacts with CHMP4B. Interacts with CHMP4C. Interacts with CHMP6. Interacts with VPS4A. Interacts with PDCD6IP; the interaction is direct. As to expression, widely expressed. Expressed at higher level in heart, kidney, liver and skeletal muscle. Also expressed in brain, placenta, lung and pancreas.

The protein localises to the cytoplasmic vesicle membrane. Its subcellular location is the late endosome membrane. Probable core component of the endosomal sorting required for transport complex III (ESCRT-III) which is involved in multivesicular bodies (MVBs) formation and sorting of endosomal cargo proteins into MVBs. MVBs contain intraluminal vesicles (ILVs) that are generated by invagination and scission from the limiting membrane of the endosome and mostly are delivered to lysosomes enabling degradation of membrane proteins, such as stimulated growth factor receptors, lysosomal enzymes and lipids. The MVB pathway appears to require the sequential function of ESCRT-O, -I,-II and -III complexes. ESCRT-III proteins mostly dissociate from the invaginating membrane before the ILV is released. The ESCRT machinery also functions in topologically equivalent membrane fission events, such as the terminal stages of cytokinesis and the budding of enveloped viruses (HIV-1 and other lentiviruses). ESCRT-III proteins are believed to mediate the necessary vesicle extrusion and/or membrane fission activities, possibly in conjunction with the AAA ATPase VPS4. When overexpressed, membrane-assembled circular arrays of CHMP4A filaments can promote or stabilize negative curvature and outward budding. Via its interaction with PDCD6IP involved in HIV-1 p6- and p9-dependent virus release. CHMP4A/B/C are required for the exosomal release of SDCBP, CD63 and syndecan. The chain is Charged multivesicular body protein 4a (CHMP4A) from Homo sapiens (Human).